We begin with the raw amino-acid sequence, 313 residues long: Porphobilinogen deaminase (313 aa).

At C242 the chain carries S-(dipyrrolylmethanemethyl)cysteine.

Belongs to the HMBS family. As to quaternary structure, monomer. The cofactor is dipyrromethane.

The enzyme catalyses 4 porphobilinogen + H2O = hydroxymethylbilane + 4 NH4(+). It participates in porphyrin-containing compound metabolism; protoporphyrin-IX biosynthesis; coproporphyrinogen-III from 5-aminolevulinate: step 2/4. Tetrapolymerization of the monopyrrole PBG into the hydroxymethylbilane pre-uroporphyrinogen in several discrete steps. The polypeptide is Porphobilinogen deaminase (Pseudomonas syringae pv. syringae (strain B728a)).